A 185-amino-acid chain; its full sequence is Peptidyl-tRNA hydrolase (185 aa).

Tyrosine 14 is a binding site for tRNA. The Proton acceptor role is filled by histidine 19. Positions 64, 66, and 112 each coordinate tRNA.

The protein belongs to the PTH family. As to quaternary structure, monomer.

It localises to the cytoplasm. It catalyses the reaction an N-acyl-L-alpha-aminoacyl-tRNA + H2O = an N-acyl-L-amino acid + a tRNA + H(+). Hydrolyzes ribosome-free peptidyl-tRNAs (with 1 or more amino acids incorporated), which drop off the ribosome during protein synthesis, or as a result of ribosome stalling. Its function is as follows. Catalyzes the release of premature peptidyl moieties from peptidyl-tRNA molecules trapped in stalled 50S ribosomal subunits, and thus maintains levels of free tRNAs and 50S ribosomes. The protein is Peptidyl-tRNA hydrolase of Shouchella clausii (strain KSM-K16) (Alkalihalobacillus clausii).